Consider the following 214-residue polypeptide: Probable GTP-binding protein EngB (214 aa).

The EngB-type G domain occupies 30–204; the sequence is EGFEVAFAGR…YTVLAGWMEL (175 aa). GTP contacts are provided by residues 38-45, 64-68, 82-85, 149-152, and 182-185; these read GRSNAGKS, GRTQL, DLPG, TKAD, and LFSA. Mg(2+)-binding residues include Ser-45 and Thr-66.

The protein belongs to the TRAFAC class TrmE-Era-EngA-EngB-Septin-like GTPase superfamily. EngB GTPase family. The cofactor is Mg(2+).

Functionally, necessary for normal cell division and for the maintenance of normal septation. This chain is Probable GTP-binding protein EngB, found in Pseudomonas fluorescens (strain Pf0-1).